A 156-amino-acid chain; its full sequence is Ribosomal RNA large subunit methyltransferase H (156 aa).

S-adenosyl-L-methionine-binding positions include Leu73, Gly104, and 123–128 (LSPLTL).

This sequence belongs to the RNA methyltransferase RlmH family. As to quaternary structure, homodimer.

The protein resides in the cytoplasm. It carries out the reaction pseudouridine(1915) in 23S rRNA + S-adenosyl-L-methionine = N(3)-methylpseudouridine(1915) in 23S rRNA + S-adenosyl-L-homocysteine + H(+). Its function is as follows. Specifically methylates the pseudouridine at position 1915 (m3Psi1915) in 23S rRNA. In Pectobacterium atrosepticum (strain SCRI 1043 / ATCC BAA-672) (Erwinia carotovora subsp. atroseptica), this protein is Ribosomal RNA large subunit methyltransferase H.